Reading from the N-terminus, the 250-residue chain is 1-(5-phosphoribosyl)-5-[(5-phosphoribosylamino)methylideneamino] imidazole-4-carboxamide isomerase (250 aa).

Asp8 serves as the catalytic Proton acceptor. Residue Asp131 is the Proton donor of the active site.

This sequence belongs to the HisA/HisF family.

The protein localises to the cytoplasm. It catalyses the reaction 1-(5-phospho-beta-D-ribosyl)-5-[(5-phospho-beta-D-ribosylamino)methylideneamino]imidazole-4-carboxamide = 5-[(5-phospho-1-deoxy-D-ribulos-1-ylimino)methylamino]-1-(5-phospho-beta-D-ribosyl)imidazole-4-carboxamide. It participates in amino-acid biosynthesis; L-histidine biosynthesis; L-histidine from 5-phospho-alpha-D-ribose 1-diphosphate: step 4/9. This chain is 1-(5-phosphoribosyl)-5-[(5-phosphoribosylamino)methylideneamino] imidazole-4-carboxamide isomerase, found in Paraburkholderia phymatum (strain DSM 17167 / CIP 108236 / LMG 21445 / STM815) (Burkholderia phymatum).